A 413-amino-acid chain; its full sequence is MKIYLVGGAVRDALLGLPVKDKDWVVVGATPQEMLDAGYQQVGRDFPVFLHPQTHEEYALARTERKSGSGYTGFTCYAAPDVTLEADLQRRDLTINALARDDDGQIIDPYHGRRDLEARLLRHVSPAFGEDPLRVLRVARFAARYAHLSFRIADETLALMREMTAAGELEHLTPERVWKETENALTTRNPQVYFQVLRDCGALRVLFPEIDALFGVPAPAKWHPEIDTGVHTLMTLSMAAMLSPQLDVRFATLCHDLGKGLTPKNLWPRHHGHGPAGVKLVEQLCQRLRVPNDLRDLAKLVAEYHDLIHTFPILQPKTIVKLFDAIDAWRKPQRVEQIALTSEADVRGRTGFEASDYPQGRWLREAWQVAQAVPTKEVVEAGFKGIEIREELTKRRIAAVANWKEKRCPPPAS.

The ATP site is built by glycine 8 and arginine 11. CTP is bound by residues glycine 8 and arginine 11. Mg(2+) is bound by residues aspartate 21 and aspartate 23. Arginine 91, arginine 137, and arginine 140 together coordinate ATP. Residues arginine 91, arginine 137, and arginine 140 each contribute to the CTP site. In terms of domain architecture, HD spans 228–329; the sequence is TGVHTLMTLS…VKLFDAIDAW (102 aa).

It belongs to the tRNA nucleotidyltransferase/poly(A) polymerase family. Bacterial CCA-adding enzyme type 1 subfamily. In terms of assembly, monomer. Can also form homodimers and oligomers. Mg(2+) serves as cofactor. Requires Ni(2+) as cofactor.

The enzyme catalyses a tRNA precursor + 2 CTP + ATP = a tRNA with a 3' CCA end + 3 diphosphate. It carries out the reaction a tRNA with a 3' CCA end + 2 CTP + ATP = a tRNA with a 3' CCACCA end + 3 diphosphate. Functionally, catalyzes the addition and repair of the essential 3'-terminal CCA sequence in tRNAs without using a nucleic acid template. Adds these three nucleotides in the order of C, C, and A to the tRNA nucleotide-73, using CTP and ATP as substrates and producing inorganic pyrophosphate. tRNA 3'-terminal CCA addition is required both for tRNA processing and repair. Also involved in tRNA surveillance by mediating tandem CCA addition to generate a CCACCA at the 3' terminus of unstable tRNAs. While stable tRNAs receive only 3'-terminal CCA, unstable tRNAs are marked with CCACCA and rapidly degraded. This Salmonella choleraesuis (strain SC-B67) protein is Multifunctional CCA protein.